A 317-amino-acid chain; its full sequence is Melanocyte-stimulating hormone receptor (317 aa).

Residues 1–37 (MPMQEPQRRLLDPFNSTRTGTPHLKLSANQTGPWCLH) are Extracellular-facing. 2 N-linked (GlcNAc...) asparagine glycosylation sites follow: Asn15 and Asn29. A helical transmembrane segment spans residues 38 to 63 (VSIPDGLFLSLGLVSLVENVLVVISI). The Cytoplasmic portion of the chain corresponds to 64-72 (AKNRNLHSP). A helical transmembrane segment spans residues 73–93 (MYYFICCLALSDLLVSVSIVL). At 94 to 118 (ETTLILVLEAGALATRVTVVQQLDN) the chain is on the extracellular side. The helical transmembrane segment at 119–140 (VIDVLICGSMVSSLCFLGAIAV) threads the bilayer. Over 141-163 (DRYISIFYALRYHSIVTLPRARW) the chain is Cytoplasmic. A helical membrane pass occupies residues 164–183 (AIVAIWVASISSSTLFVAYY). Residues 184–191 (NHTAVLLC) are Extracellular-facing. Residues 192-211 (LVTFFLATLALMAVLYVHML) form a helical membrane-spanning segment. Residues 212–240 (ARAHQHAQAIAQLHKRQHLVHQGFRLKGA) lie on the Cytoplasmic side of the membrane. A helical transmembrane segment spans residues 241–266 (ATLTILLGIFFLCWGPFFLYLTLIVL). Topologically, residues 267–279 (CPKHPTCSCFFKN) are extracellular. Residues 280–300 (LNLFLALIIFNSIVDPLIYAF) traverse the membrane as a helical segment. Over 301–317 (RSQELRMTLKEVLLCSW) the chain is Cytoplasmic. Cys315 is lipidated: S-palmitoyl cysteine.

This sequence belongs to the G-protein coupled receptor 1 family. In terms of assembly, interacts with MGRN1, but does not undergo MGRN1-mediated ubiquitination; this interaction competes with GNAS-binding and thus inhibits agonist-induced cAMP production. Interacts with OPN3; the interaction results in a decrease in MC1R-mediated cAMP signaling and ultimately a decrease in melanin production in melanocytes.

The protein resides in the cell membrane. Functionally, receptor for MSH (alpha, beta and gamma) and ACTH. The activity of this receptor is mediated by G proteins which activate adenylate cyclase. Mediates melanogenesis, the production of eumelanin (black/brown) and phaeomelanin (red/yellow), via regulation of cAMP signaling in melanocytes. In Chaetodipus baileyi (Bailey's pocket mouse), this protein is Melanocyte-stimulating hormone receptor (MC1R).